A 217-amino-acid chain; its full sequence is Putative thymidylate synthase (217 aa).

The active site involves Cys139.

This sequence belongs to the thymidylate synthase family. Archaeal-type ThyA subfamily. Monomer.

Its subcellular location is the cytoplasm. Its pathway is pyrimidine metabolism; dTTP biosynthesis. Its function is as follows. May catalyze the biosynthesis of dTMP using an unknown cosubstrate. This is Putative thymidylate synthase from Methanococcoides burtonii (strain DSM 6242 / NBRC 107633 / OCM 468 / ACE-M).